The sequence spans 389 residues: MGQNLSTSNPLGFFPEHQLDPAFKANTNNPDWDFNPNKDNWPKANEVGVGAFGPGLTPPHGGLLGWSPQAQGIITTVPANPPPASTNRQSGRKPTPISPPLRDTHPQAMHWNSTTFHQALQDPRVRGLYFPAGGSSSGTAYPVPDTASHISSIFSRTGDPAPNMESITSGFLGPLLVLQAGFFLLTKILTIPQSLDSWWTSLNFLGGAPVCLGQNSQSPTSNHSPTSCPPICPGYRWMCLRRFIIFLFILLLCLIFLLVLLDYQGMLPVCPLIPGSTTTSTGPCKTCTTTAQGTSLYPSCCCTKPSDGNCTCIPIPSSWAFAKFLWEWASVRFSWLSLLAPFVQWFAGLSPTVWLSVIWMMWYWGPNLYNILSPFIPLLPIFFCLWVYI.

Methionine 1 is modified (N-acetylmethionine). Residue glycine 2 is the site of N-myristoyl glycine; by host attachment. The interval 2 to 108 is pre-S1; the sequence is GQNLSTSNPL…PPLRDTHPQA (107 aa). The pre-S stretch occupies residues 2 to 163; it reads GQNLSTSNPL…FSRTGDPAPN (162 aa). The Virion surface; in external conformation portion of the chain corresponds to 2 to 170; the sequence is GQNLSTSNPL…APNMESITSG (169 aa). Over 2 to 242 the chain is Intravirion; in internal conformation; the sequence is GQNLSTSNPL…PGYRWMCLRR (241 aa). The segment at 73 to 99 is disordered; it reads IITTVPANPPPASTNRQSGRKPTPISP. The interval 109 to 163 is pre-S2; that stretch reads MHWNSTTFHQALQDPRVRGLYFPAGGSSSGTAYPVPDTASHISSIFSRTGDPAPN. Residues 171 to 191 form a helical membrane-spanning segment; the sequence is FLGPLLVLQAGFFLLTKILTI. The Intravirion; in external conformation portion of the chain corresponds to 192-242; sequence PQSLDSWWTSLNFLGGAPVCLGQNSQSPTSNHSPTSCPPICPGYRWMCLRR. A helical membrane pass occupies residues 243–263; the sequence is FIIFLFILLLCLIFLLVLLDY. The Virion surface portion of the chain corresponds to 264–337; it reads QGMLPVCPLI…WASVRFSWLS (74 aa). N-linked (GlcNAc...) asparagine; by host glycosylation is present at asparagine 309. The chain crosses the membrane as a helical span at residues 338–358; it reads LLAPFVQWFAGLSPTVWLSVI. Residues 359 to 364 lie on the Intravirion side of the membrane; sequence WMMWYW. The helical transmembrane segment at 365 to 387 threads the bilayer; the sequence is GPNLYNILSPFIPLLPIFFCLWV. Residues 388–389 are Virion surface-facing; the sequence is YI.

Belongs to the orthohepadnavirus major surface antigen family. In terms of assembly, in its internal form (Li-HBsAg), interacts with the capsid protein and with the isoform S. Interacts with host chaperone CANX. Associates with host chaperone CANX through its pre-S2 N glycan; this association may be essential for isoform M proper secretion. As to quaternary structure, interacts with isoform L. Interacts with the antigens of satellite virus HDV (HDVAgs); this interaction is required for encapsidation of HDV genomic RNA. Isoform M is N-terminally acetylated by host at a ratio of 90%, and N-glycosylated by host at the pre-S2 region. In terms of processing, myristoylated.

It localises to the virion membrane. Functionally, the large envelope protein exists in two topological conformations, one which is termed 'external' or Le-HBsAg and the other 'internal' or Li-HBsAg. In its external conformation the protein attaches the virus to cell receptors and thereby initiating infection. This interaction determines the species specificity and liver tropism. This attachment induces virion internalization predominantly through caveolin-mediated endocytosis. The large envelope protein also assures fusion between virion membrane and endosomal membrane. In its internal conformation the protein plays a role in virion morphogenesis and mediates the contact with the nucleocapsid like a matrix protein. In terms of biological role, the middle envelope protein plays an important role in the budding of the virion. It is involved in the induction of budding in a nucleocapsid independent way. In this process the majority of envelope proteins bud to form subviral lipoprotein particles of 22 nm of diameter that do not contain a nucleocapsid. The polypeptide is Large envelope protein (Gorilla gorilla (western gorilla)).